Consider the following 337-residue polypeptide: uncharacterized protein (337 aa).

Transmembrane regions (helical) follow at residues 241-261 (FTLL…GAFI) and 273-293 (ASLI…IGII).

Belongs to the glycosyltransferase 2 family.

It is found in the cell membrane. This is an uncharacterized protein from Bacillus subtilis (strain 168).